Reading from the N-terminus, the 148-residue chain is Hemoglobin subunit beta-B (148 aa).

A Globin domain is found at 3–148; sequence DWTDAERAAI…VVSALGRQYH (146 aa). Heme b-binding residues include histidine 64 and histidine 93.

Belongs to the globin family. Heterotetramer of two alpha chains and two beta chains. As to expression, red blood cells.

Its function is as follows. Involved in oxygen transport from gills to the various peripheral tissues. This is Hemoglobin subunit beta-B (hbb2) from Seriola quinqueradiata (Five-ray yellowtail).